Consider the following 377-residue polypeptide: uncharacterized protein (377 aa).

Positions 1 to 46 are disordered; sequence MLAGLRRRGSMTTPPGPEIPPPHQGGFYSAGHHPQRPWPETPPPKT. Pro residues-rich tracts occupy residues 14 to 23 and 36 to 45; these read PPGPEIPPPH and RPWPETPPPK. Residues 53 to 73 traverse the membrane as a helical segment; it reads MLGAVALLAVVGVTVAVTLAV. The tract at residues 77-107 is disordered; the sequence is DKRDAIPPGSGVSGSPTASDIASADDSGPVS.

The protein resides in the cell inner membrane. In terms of biological role, may be involved in the ESX-1 / type VII specialized secretion system (T7SS), which exports several proteins including EsxA and EsxB. Involved in DNA conjugation in the recipient strain. This is an uncharacterized protein from Mycolicibacterium smegmatis (strain MKD8) (Mycobacterium smegmatis).